Consider the following 429-residue polypeptide: Cell wall protein ECM33 (429 aa).

The N-terminal stretch at 1–19 (MQFKNALTATAILSASALA) is a signal peptide. Asparagine 21, asparagine 56, asparagine 82, asparagine 196, asparagine 209, asparagine 227, asparagine 234, asparagine 241, asparagine 267, asparagine 279, asparagine 304, and asparagine 328 each carry an N-linked (GlcNAc...) asparagine glycan. A Phosphoserine modification is found at serine 339. A compositionally biased stretch (low complexity) spans 361–401 (LSSTSTESSKSSATSSASSSGDASNAQANVSASASSSSSSS). The disordered stretch occupies residues 361–410 (LSSTSTESSKSSATSSASSSGDASNAQANVSASASSSSSSSKKSKGAAPE). An N-linked (GlcNAc...) asparagine glycan is attached at asparagine 389. A lipid anchor (GPI-anchor amidated glycine) is attached at glycine 406. Residues 407–429 (AAPELVPATSFMGVVAAVGVALL) constitute a propeptide, removed in mature form.

The protein belongs to the SPS2 family. In terms of processing, the GPI-anchor is attached to the protein in the endoplasmic reticulum and serves to target the protein to the cell surface. There, the glucosamine-inositol phospholipid moiety is cleaved off and the GPI-modified mannoprotein is covalently attached via its lipidless GPI glycan remnant to the 1,6-beta-glucan of the outer cell wall layer. Post-translationally, extensively N-glycosylated.

The protein localises to the cell membrane. It localises to the secreted. It is found in the cell wall. Required for proper cell wall integrity and for the correct assembly of the mannoprotein outer layer of the cell wall. Important for apical bud growth. In Saccharomyces cerevisiae (strain ATCC 204508 / S288c) (Baker's yeast), this protein is Cell wall protein ECM33 (ECM33).